The primary structure comprises 75 residues: Small ribosomal subunit protein bS18 (75 aa).

This sequence belongs to the bacterial ribosomal protein bS18 family. As to quaternary structure, part of the 30S ribosomal subunit. Forms a tight heterodimer with protein bS6.

Binds as a heterodimer with protein bS6 to the central domain of the 16S rRNA, where it helps stabilize the platform of the 30S subunit. The polypeptide is Small ribosomal subunit protein bS18 (Shewanella halifaxensis (strain HAW-EB4)).